Consider the following 305-residue polypeptide: Transcription factor MYB87 (305 aa).

HTH myb-type domains follow at residues 9 to 66 (KMAV…RPNL) and 67 to 117 (KHGG…KKKL). DNA-binding regions (H-T-H motif) lie at residues 38–62 (WISL…LNYL) and 90–113 (WSII…NTRL).

In terms of tissue distribution, expressed in roots, leaves, internodes, shoot tips and flowers.

The protein localises to the nucleus. Transcription factor that functions as a regulator of genes affecting cell wall organization and remodeling. Activates genes related to the primary cell wall and represses genes related to the secondary cell wall and expansins. Required for the regulation of longitudinal cell growth in stems, leaves, petioles, roots, flowers and siliques. The polypeptide is Transcription factor MYB87 (Arabidopsis thaliana (Mouse-ear cress)).